The chain runs to 70 residues: Testis-expressed protein 53 (70 aa).

As to expression, expressed in Testis.

This is Testis-expressed protein 53 from Homo sapiens (Human).